A 648-amino-acid chain; its full sequence is Replication restart protein PriA (648 aa).

One can recognise a Helicase ATP-binding domain in the interval 131–297; it reads TILNESNKPT…EIGKYQLVTL (167 aa). ATP is bound at residue 144–151; it reads GVTGSGKT. The DEAH box signature appears at 240–243; it reads DEEH. Cysteine 358, cysteine 361, cysteine 367, cysteine 370, cysteine 385, cysteine 388, cysteine 398, and cysteine 401 together coordinate Zn(2+). A Helicase C-terminal domain is found at 393-548; sequence KIFSSCPECL…SFFANELEIR (156 aa).

This sequence belongs to the helicase family. PriA subfamily. In terms of assembly, component of the replication restart primosome. It depends on Zn(2+) as a cofactor.

It catalyses the reaction Couples ATP hydrolysis with the unwinding of duplex DNA by translocating in the 3'-5' direction.. The catalysed reaction is ATP + H2O = ADP + phosphate + H(+). Functionally, initiates the restart of stalled replication forks, which reloads the replicative helicase on sites other than the origin of replication. Recognizes and binds to abandoned replication forks and remodels them to uncover a helicase loading site. Promotes assembly of the primosome at these replication forks. The sequence is that of Replication restart protein PriA from Rickettsia felis (strain ATCC VR-1525 / URRWXCal2) (Rickettsia azadi).